Here is a 297-residue protein sequence, read N- to C-terminus: Streptogrisin-A (297 aa).

An N-terminal signal peptide occupies residues Met1–Ala38. Positions Ala39 to Pro115 are excised as a propeptide. A disulfide bridge connects residues Cys130 and Cys150. Catalysis depends on charge relay system residues His149, Asp171, and Ser253. A disulfide bridge links Cys247 with Cys274.

Belongs to the peptidase S1 family. In terms of assembly, monomer.

The catalysed reaction is Hydrolysis of proteins with specificity similar to chymotrypsin.. Functionally, has a primary specificity for large aliphatic or aromatic amino acids. The sequence is that of Streptogrisin-A (sprA) from Streptomyces griseus.